Reading from the N-terminus, the 424-residue chain is Glutamate-1-semialdehyde 2,1-aminomutase (424 aa).

Lys-263 carries the post-translational modification N6-(pyridoxal phosphate)lysine.

The protein belongs to the class-III pyridoxal-phosphate-dependent aminotransferase family. HemL subfamily. As to quaternary structure, homodimer. The cofactor is pyridoxal 5'-phosphate.

It localises to the cytoplasm. The catalysed reaction is (S)-4-amino-5-oxopentanoate = 5-aminolevulinate. It participates in porphyrin-containing compound metabolism; protoporphyrin-IX biosynthesis; 5-aminolevulinate from L-glutamyl-tRNA(Glu): step 2/2. The chain is Glutamate-1-semialdehyde 2,1-aminomutase from Campylobacter jejuni (strain RM1221).